Consider the following 262-residue polypeptide: 3-methyl-2-oxobutanoate hydroxymethyltransferase (262 aa).

Positions 42 and 81 each coordinate Mg(2+). Residues 42–43 (DS), D81, and K110 contribute to the 3-methyl-2-oxobutanoate site. E112 lines the Mg(2+) pocket. Residue E179 is the Proton acceptor of the active site.

The protein belongs to the PanB family. In terms of assembly, homodecamer; pentamer of dimers. Mg(2+) is required as a cofactor.

It is found in the cytoplasm. It carries out the reaction 3-methyl-2-oxobutanoate + (6R)-5,10-methylene-5,6,7,8-tetrahydrofolate + H2O = 2-dehydropantoate + (6S)-5,6,7,8-tetrahydrofolate. The protein operates within cofactor biosynthesis; (R)-pantothenate biosynthesis; (R)-pantoate from 3-methyl-2-oxobutanoate: step 1/2. Its function is as follows. Catalyzes the reversible reaction in which hydroxymethyl group from 5,10-methylenetetrahydrofolate is transferred onto alpha-ketoisovalerate to form ketopantoate. This is 3-methyl-2-oxobutanoate hydroxymethyltransferase from Methylobacillus flagellatus (strain ATCC 51484 / DSM 6875 / VKM B-1610 / KT).